Consider the following 359-residue polypeptide: Heat-inducible transcription repressor HrcA (359 aa).

This sequence belongs to the HrcA family.

Functionally, negative regulator of class I heat shock genes (grpE-dnaK-dnaJ and groELS operons). Prevents heat-shock induction of these operons. This is Heat-inducible transcription repressor HrcA from Rhizobium meliloti (strain 1021) (Ensifer meliloti).